A 190-amino-acid chain; its full sequence is MDTKMTEREKMTKGLMYDPGDEELCKGRTEARQLIHRFNNSMDKLERKDITKQLFGSTGEKIYLEPTLRVDYGYNIHVGENFYANFGAIFLDICPITIGKNAMLAPNVQLYSATHPIDPTERNSGLEFGKPITIGDNAWIGGGAIILPGVTLGDNVVVGSGAVVTRSFGSNVVIAGNPAKVIKEIPVKSE.

Belongs to the transferase hexapeptide repeat family.

This chain is Putative acetyltransferase DDB_G0275913, found in Dictyostelium discoideum (Social amoeba).